The sequence spans 463 residues: Probable Xaa-Pro aminopeptidase PEPP (463 aa).

Mn(2+)-binding residues include aspartate 259, aspartate 270, glutamate 393, and glutamate 433.

This sequence belongs to the peptidase M24B family. Mn(2+) serves as cofactor.

The catalysed reaction is Release of any N-terminal amino acid, including proline, that is linked to proline, even from a dipeptide or tripeptide.. Functionally, catalyzes the removal of a penultimate prolyl residue from the N-termini of peptides. In Phaeosphaeria nodorum (strain SN15 / ATCC MYA-4574 / FGSC 10173) (Glume blotch fungus), this protein is Probable Xaa-Pro aminopeptidase PEPP (PEPP).